The sequence spans 147 residues: Hemoglobin subunit beta (147 aa).

One can recognise a Globin domain in the interval 2–147 (DWTDAERAAI…VVSALGRQYH (146 aa)). His63 and His92 together coordinate heme b.

Belongs to the globin family. As to quaternary structure, heterotetramer of two alpha chains and two beta chains. In terms of tissue distribution, red blood cells.

Functionally, involved in oxygen transport from gills to the various peripheral tissues. This is Hemoglobin subunit beta (hbb) from Leiostomus xanthurus (Spot).